We begin with the raw amino-acid sequence, 250 residues long: Snake venom serine protease pictobin (250 aa).

Residues 1 to 11 form the signal peptide; the sequence is ANLLILQVSYA. Positions 12 to 17 are excised as a propeptide; sequence QKSSEL. The region spanning 18-241 is the Peptidase S1 domain; sequence VIGGDECNIN…HLHWILSIIA (224 aa). 5 cysteine pairs are disulfide-bonded: cysteine 24-cysteine 155, cysteine 42-cysteine 58, cysteine 134-cysteine 202, cysteine 166-cysteine 181, and cysteine 192-cysteine 217. Catalysis depends on histidine 57, which acts as the Charge relay system. N-linked (GlcNAc...) asparagine glycosylation is found at asparagine 71 and asparagine 95. The active-site Charge relay system is aspartate 102. Asparagine 146 and asparagine 162 each carry an N-linked (GlcNAc...) asparagine glycan. Serine 196 (charge relay system) is an active-site residue. A glycan (N-linked (GlcNAc...) asparagine) is linked at asparagine 243.

Belongs to the peptidase S1 family. Snake venom subfamily. In terms of assembly, monomer. Expressed by the venom gland.

The protein resides in the secreted. Its function is as follows. Snake venom serine protease that may impair the hemostatic system of the prey. This chain is Snake venom serine protease pictobin, found in Bothrops pictus (Desert lancehead).